The sequence spans 148 residues: 3-dehydroquinate dehydratase (148 aa).

The active-site Proton acceptor is the Tyr23. Residues Asn75, His81, and Asp88 each coordinate substrate. His101 functions as the Proton donor in the catalytic mechanism. Residues 102 to 103 and Arg112 each bind substrate; that span reads LS.

The protein belongs to the type-II 3-dehydroquinase family. In terms of assembly, homododecamer.

It carries out the reaction 3-dehydroquinate = 3-dehydroshikimate + H2O. It participates in metabolic intermediate biosynthesis; chorismate biosynthesis; chorismate from D-erythrose 4-phosphate and phosphoenolpyruvate: step 3/7. Catalyzes a trans-dehydration via an enolate intermediate. This Xanthomonas campestris pv. campestris (strain B100) protein is 3-dehydroquinate dehydratase.